The following is a 472-amino-acid chain: uncharacterized protein (472 aa).

The protein localises to the mitochondrion. This is an uncharacterized protein from Saccharomyces cerevisiae (strain ATCC 204508 / S288c) (Baker's yeast).